A 2272-amino-acid polypeptide reads, in one-letter code: MSTEAKRRRNQKKKQKQKQKKAAEKMQEQASLESTLGSPIDVSIFEQQQYGGAEDAEAAGAAAARESADESRGASVESSGSTDNAIGDDRAGSAPSPYVAVGDSAAVSTAVEVSAPLQDEAFSAVDVEATESPASALPAASVEESEHVSIATPAEPSAAPVAPEAAASEENVVQMAGENGTNPEADVPIEDESNFLFGDSPHSPLPWDDGGASDPEQRPEMTEERPELPTFEEERTQHTSLLPSTSNEHKTPQEALSSEEDQAAEPEQNIGVCDGHAEDSTVDVEWEQHTSSSELFGEEHDTPHSPLPWEEQEAAAPEENRSRMEEHKESISGDERDQDVPITEDSAKTGSLPEDTVPGENTPGDIPETATSAKNVDFDSANGTGNVPVESQAHSTTHTPEEYAADSNSLFALEDDGGDFLAELSNGHDVSSQSAADMLPIDDNVPRTTFDGADALAGPAETYEPGDLFADEDTAEEPPWAQNTNPNVDTSQQLPVSRSSAELSSSQAAKETPGIEVPPPMFWDEESDSIEASNDQLAFTPVAQRGKVTLPDKKFSFLDNDDDLLNDDEEEEANAGDQPENDQENCDDDSFLDSDEEPPLLPPKAGKTTYTPSTQVLGQDRSSYDAHNLSSSMAVSPAVAAVTGQQQFLPGPPVPEKPKVGKYALPKQPNPPPQTNKGYYAPTLGGVGLEATDKPPVLSVNDESVRRLEEEKKKSDAYDFPLELVKSKPKPAKPVPVPSIPSIVTASQPASRSFSPSDAQPVFSPEKAGITPLKPTVPPVKNPYQPNFDGNYLSLVDAVNSRTSSVQQNPYAPPPVNVGPQVTSEKPYAAYEGAASGSQSQHPFPPQPLGAYGTNAPKPPLNSYNLAAAQMDSPKERRPAAYVNTSRTRAISNASVGSSGSYNSHQLPAGPTVVPPRFAFPPPQAHISPTIPALQTVGIAGAPPAVSSPGTQRRTHARSHSSVYAPANAPHASKYAPTVHPSVQQKYPSVAGPSKRSLAGNGVPDGVSNRVLPPTIQEVPVDGHALNFRQFPLFNWSQTSKIVYGLSLPIDTGNYMLGKPFPVSGIHVRNSESILVPNVILKDFPGPLIKGKTRTKDLEKWLELSIAYQRESLPGRDLTLWYVLKHKLSTSGSLRELSKILYDSDQLIPYMGQMHSHGRPTLLSHKLDPNSQMQILAHLQVGSPGAALDLALAQKDYALALVLSSLIGKDKWSEVVDTYLREEFSVSAGNNQFSVYLLALIFQVFVGNSNRVLQELTANPLKRDWAIQDWNIILAAVLNNIPKDVDPRQLPPVVMEFLVGFGVFLVQSGKLAAGAVCFVIANVPLSQNELLPHSGVKFECLGSINSLDAVLLSEVYEYYYTTINDNCPFFASLLLMKTVHASALLDYGLPTTVPKYLDVITGLLRNAPKNSAIAVSLTHQLESINLRLSGVTTAWIGKPTLSSVWGQLDKSFNKFIGGDADDFSKQPEKTVFDSFTPSASRNASMVDLNHGVTPMRPSAIKNSGVNRSHTDLPVSNKGGYAPLNAPGSNVFSVSRSNNHPHGTEHGNSMSNLHGDSQHLTHKTNYTPHRASNLISPKYPEEPQNSHLPNQQSNLPSPANGHSRNPSIPSVATPPPIFSAPPKRARGKYAATASGAVSVDQLYSDAGHSNTPTKVKSVPTCPEIAETPAALATRQATDSMTDFFAPPLLQAGLQQDRRSSAYSASSQGILPSSRRSSNISDVMLPPKKSGSGKPYRKTTVNYTPIDMEASSLAPSSVSLSQSTGDTTTEVKRARNSGEASNSSATEVADSTVLHKSPESVDTSEYSFPDESVQSWEENAEDDQDPLHTVSAISNTEVPVDKRDGERGSQNTLTKAAPYSDLAPYEHEGNAPSTESPAIKGSRVQVQVQVTPPEDFAHIQSQVVSPEKEASPTVEKGANANESSPDLHERQPYAGLGVSYNPNTGGPRPFASHQYLPRAPAVPAYSPIEENAAEEGRTDNQTKAVEKQEHAVLKRTVSGPVIGSEKLMSPALAHPIPRTSRFEPIKEIIQNDEDTFRKDKVPVIRASSNPNFNPYTPVASEQYYDDVVEDESDDSEEESERKRQEKEKEEERKREAAEKEKRKNEGGGSSRWFGWLKKDTNEKKPIKAKLGQKNNFYYDEKLKRWVNKDATEEEKQKVSTPPPPPPVVKRKMNTTPEIKPRSGSVVGGPAIRTQGAVAPVNPQDPQPCQAVVGASSALQKQASPVKPRDPAINLTSKKANGLDDLISLTAGPSNAVSRRKKKPGRGYVNVLNNL.

Over residues 1–20 (MSTEAKRRRNQKKKQKQKQK) the composition is skewed to basic residues. Disordered regions lie at residues 1 to 99 (MSTE…SPYV), 124 to 401 (AVDV…HTPE), 430 to 630 (VSSQ…HNLS), 646 to 714 (QQFL…EKKK), 727 to 785 (SKPK…NPYQ), 832 to 852 (EGAA…LGAY), 1488 to 1624 (LNHG…PKRA), 1694 to 1737 (QDRR…YRKT), 1750 to 1990 (SLAP…EHAV), 2043 to 2125 (RASS…KPIK), and 2146 to 2187 (KDAT…VGGP). Over residues 151-170 (ATPAEPSAAPVAPEAAASEE) the composition is skewed to low complexity. Basic and acidic residues-rich tracts occupy residues 215 to 237 (PEQR…ERTQ) and 318 to 339 (EENR…RDQD). Residues 481 to 496 (AQNTNPNVDTSQQLPV) are compositionally biased toward polar residues. Low complexity predominate over residues 497–509 (SRSSAELSSSQAA). A compositionally biased stretch (acidic residues) spans 559–598 (DNDDDLLNDDEEEEANAGDQPENDQENCDDDSFLDSDEEP). Residues 608–621 (TTYTPSTQVLGQDR) show a composition bias toward polar residues. Basic and acidic residues predominate over residues 703–714 (ESVRRLEEEKKK). Residues 748-758 (QPASRSFSPSD) show a composition bias toward polar residues. 3 stretches are compositionally biased toward polar residues: residues 1526 to 1554 (PGSN…NLHG), 1582 to 1609 (PQNS…SIPS), and 1699 to 1719 (SAYS…SNIS). A compositionally biased stretch (low complexity) spans 1750-1761 (SLAPSSVSLSQS). Residues 1798–1815 (SVDTSEYSFPDESVQSWE) show a composition bias toward polar residues. Over residues 1972 to 1990 (EEGRTDNQTKAVEKQEHAV) the composition is skewed to basic and acidic residues. Residues 2061-2076 (YYDDVVEDESDDSEEE) are compositionally biased toward acidic residues. 3 stretches are compositionally biased toward basic and acidic residues: residues 2077–2103 (SERK…RKNE), 2114–2123 (LKKDTNEKKP), and 2146–2155 (KDATEEEKQK).

It belongs to the SEC16 family.

The protein localises to the endoplasmic reticulum membrane. Functionally, involved in the initiation of assembly of the COPII coat required for the formation of transport vesicles from the endoplasmic reticulum (ER) and the selection of cargo molecules. Also involved in autophagy. The chain is COPII coat assembly protein SEC16 (SEC16) from Eremothecium gossypii (strain ATCC 10895 / CBS 109.51 / FGSC 9923 / NRRL Y-1056) (Yeast).